We begin with the raw amino-acid sequence, 119 residues long: Immunoglobulin heavy variable 3-15 (119 aa).

The signal sequence occupies residues 1 to 19 (MEFGLSWIFLAAILKGVQC). The tract at residues 20-44 (EVQLVESGGGLVKPGGSLRLSCAAS) is framework-1. The 100-residue stretch at 20-119 (EVQLVESGGG…EDTAVYYCTT (100 aa)) folds into the Ig-like domain. Residues cysteine 41 and cysteine 117 are joined by a disulfide bond. Residues 45–52 (GFTFSNAW) are complementarity-determining-1. The segment at 53-69 (MSWVRQAPGKGLEWVGR) is framework-2. The complementarity-determining-2 stretch occupies residues 70 to 79 (IKSKTDGGTT). The framework-3 stretch occupies residues 80-117 (DYAAPVKGRFTISRDDSKNTLYLQMNSLKTEDTAVYYC). The segment at 118–119 (TT) is complementarity-determining-3.

As to quaternary structure, immunoglobulins are composed of two identical heavy chains and two identical light chains; disulfide-linked.

The protein localises to the secreted. It localises to the cell membrane. In terms of biological role, v region of the variable domain of immunoglobulin heavy chains that participates in the antigen recognition. Immunoglobulins, also known as antibodies, are membrane-bound or secreted glycoproteins produced by B lymphocytes. In the recognition phase of humoral immunity, the membrane-bound immunoglobulins serve as receptors which, upon binding of a specific antigen, trigger the clonal expansion and differentiation of B lymphocytes into immunoglobulins-secreting plasma cells. Secreted immunoglobulins mediate the effector phase of humoral immunity, which results in the elimination of bound antigens. The antigen binding site is formed by the variable domain of one heavy chain, together with that of its associated light chain. Thus, each immunoglobulin has two antigen binding sites with remarkable affinity for a particular antigen. The variable domains are assembled by a process called V-(D)-J rearrangement and can then be subjected to somatic hypermutations which, after exposure to antigen and selection, allow affinity maturation for a particular antigen. This Homo sapiens (Human) protein is Immunoglobulin heavy variable 3-15.